The sequence spans 360 residues: NAD(P)H-quinone oxidoreductase subunit 1, chloroplastic (360 aa).

8 helical membrane passes run 27 to 47 (VWIF…VLVI), 98 to 118 (FSIG…VIPF), 129 to 149 (IGIF…LMSG), 165 to 185 (AAQS…ISLL), 203 to 223 (FWGW…ISSL), 253 to 273 (FGLF…FVTI), 297 to 317 (VFGT…VLVI), and 340 to 360 (FLLP…LLSL).

Belongs to the complex I subunit 1 family. As to quaternary structure, NDH is composed of at least 16 different subunits, 5 of which are encoded in the nucleus.

Its subcellular location is the plastid. The protein localises to the chloroplast thylakoid membrane. It catalyses the reaction a plastoquinone + NADH + (n+1) H(+)(in) = a plastoquinol + NAD(+) + n H(+)(out). The enzyme catalyses a plastoquinone + NADPH + (n+1) H(+)(in) = a plastoquinol + NADP(+) + n H(+)(out). In terms of biological role, NDH shuttles electrons from NAD(P)H:plastoquinone, via FMN and iron-sulfur (Fe-S) centers, to quinones in the photosynthetic chain and possibly in a chloroplast respiratory chain. The immediate electron acceptor for the enzyme in this species is believed to be plastoquinone. Couples the redox reaction to proton translocation, and thus conserves the redox energy in a proton gradient. The protein is NAD(P)H-quinone oxidoreductase subunit 1, chloroplastic of Draba nemorosa (Woodland whitlowgrass).